The chain runs to 1939 residues: Myosin-1 (1939 aa).

The Myosin N-terminal SH3-like domain occupies 33 to 82 (DAKTSVFVAEPKESFVKGTVQSREGGKVTVKTEAGATLTVKEDQVFPMNP). Phosphothreonine is present on residues Thr64 and Thr69. Residues 86–782 (DKIEDMAMMT…LLGLLEEMRD (697 aa)) enclose the Myosin motor domain. Lys130 is subject to N6,N6,N6-trimethyllysine. Position 179–186 (179–186 (GESGAGKT)) interacts with ATP. Residue Tyr389 is modified to Phosphotyrosine. Ser392 carries the phosphoserine modification. Thr419 bears the Phosphothreonine mark. A Phosphotyrosine modification is found at Tyr424. At Ser625 the chain carries Phosphoserine. The interval 659–681 (LNKLMTNLRSTHPHFVRCIIPNE) is actin-binding. The residue at position 757 (His757) is a Pros-methylhistidine. An actin-binding region spans residues 761–775 (KFGHTKVFFKAGLLG). The 30-residue stretch at 785-814 (LAQLITRTQARCRGFLARVEYQKMVERRES) folds into the IQ domain. Positions 843–1939 (LLKSAETEKE…EVHTKIISEE (1097 aa)) form a coiled coil. Ser1092 and Ser1096 each carry phosphoserine. Disordered stretches follow at residues 1125-1147 (EIEA…SREL) and 1153-1172 (RLEE…KKRE). Positions 1128–1147 (AERASRAKAEKQRSDLSREL) are enriched in basic and acidic residues. Residues Ser1162 and Ser1237 each carry the phosphoserine modification. The residue at position 1241 (Thr1241) is a Phosphothreonine. Ser1243 is subject to Phosphoserine. A Phosphothreonine modification is found at Thr1255. Ser1261 is subject to Phosphoserine. Residues Thr1265 and Thr1286 each carry the phosphothreonine modification. A phosphoserine mark is found at Ser1288, Ser1292, Ser1303, and Ser1306. Tyr1464 carries the phosphotyrosine modification. The residue at position 1467 (Thr1467) is a Phosphothreonine. A Phosphoserine modification is found at Ser1474. Tyr1492 is subject to Phosphotyrosine. A Phosphoserine modification is found at Ser1495. Thr1501 bears the Phosphothreonine mark. Position 1514 is a phosphoserine (Ser1514). Residue Thr1517 is modified to Phosphothreonine. Phosphoserine is present on residues Ser1554, Ser1574, Ser1600, Ser1603, Ser1714, and Ser1726. 2 positions are modified to phosphothreonine: Thr1730 and Thr1736. Ser1739 is subject to Phosphoserine.

The protein belongs to the TRAFAC class myosin-kinesin ATPase superfamily. Myosin family. Muscle myosin is a hexameric protein that consists of 2 heavy chain subunits (MHC), 2 alkali light chain subunits (MLC) and 2 regulatory light chain subunits (MLC-2). Interacts with SLC26A5.

The protein localises to the cytoplasm. It is found in the myofibril. Functionally, required for normal hearing. It plays a role in cochlear amplification of auditory stimuli, likely through the positive regulation of prestin (SLC26A5) activity and outer hair cell (OHC) electromotility. This Canis lupus familiaris (Dog) protein is Myosin-1 (MYH1).